A 905-amino-acid chain; its full sequence is DNA mismatch repair protein MutS (905 aa).

The disordered stretch occupies residues 388–410 (LERPANPEGTYPTDAETSGDTLP). 638-645 (GPNMAGKS) is a binding site for ATP. The disordered stretch occupies residues 826–847 (RDAARGTNSAPSRQTLPGLDLP). Over residues 831-840 (GTNSAPSRQT) the composition is skewed to polar residues.

Belongs to the DNA mismatch repair MutS family.

Its function is as follows. This protein is involved in the repair of mismatches in DNA. It is possible that it carries out the mismatch recognition step. This protein has a weak ATPase activity. This is DNA mismatch repair protein MutS from Nitratidesulfovibrio vulgaris (strain DP4) (Desulfovibrio vulgaris).